Reading from the N-terminus, the 118-residue chain is Urease subunit beta (118 aa).

The protein belongs to the urease beta subunit family. As to quaternary structure, heterotrimer of UreA (gamma), UreB (beta) and UreC (alpha) subunits. Three heterotrimers associate to form the active enzyme.

It localises to the cytoplasm. The catalysed reaction is urea + 2 H2O + H(+) = hydrogencarbonate + 2 NH4(+). Its pathway is nitrogen metabolism; urea degradation; CO(2) and NH(3) from urea (urease route): step 1/1. This is Urease subunit beta from Aliivibrio fischeri (strain MJ11) (Vibrio fischeri).